A 404-amino-acid polypeptide reads, in one-letter code: Odorant receptor 74a (404 aa).

Topologically, residues 1–38 are cytoplasmic; it reads MSFHRYRPRLPGGELAPMPWPVSLYRVLNHVAWPLEAE. The helical transmembrane segment at 39–59 threads the bilayer; sequence SGRWTVFLDRLMIFLGFLVFC. At 60–67 the chain is on the extracellular side; the sequence is EHNEVDFH. A helical membrane pass occupies residues 68–88; it reads YLIANRQDMDNMLTGLPTYLI. The Cytoplasmic segment spans residues 89–141; the sequence is LVEMQIRCFQLAWHKDRFRALLQRFYAEIYVSEEMEPHLFASIQRQMLATRVN. A helical transmembrane segment spans residues 142-162; the sequence is STVYLLALLNFFLVPVTNVIY. Residues 163-181 lie on the Extracellular side of the membrane; it reads HRREMLYKQVYPFDNTQLH. The chain crosses the membrane as a helical span at residues 182–202; that stretch reads FFIPLLVLNFWVGFIITSMLF. Topologically, residues 203–274 are cytoplasmic; that stretch reads GELNVMGELM…QRVEKEFTLR (72 aa). A helical transmembrane segment spans residues 275–295; it reads IFVMFAFSAGLLCALFFKAFT. Over 296–303 the chain is Extracellular; sequence NPWGNVAY. Residues 304-324 traverse the membrane as a helical segment; it reads IVWFLAKFMELLALGMLGSIL. At 325–380 the chain is on the cytoplasmic side; that stretch reads LKTTDELGMMYYTADWEQVIHQSDNVGENVKLMKLVTLAIQLNSRPFFITGLNYFR. The chain crosses the membrane as a helical span at residues 381-401; the sequence is VSLTAVLKIIQGAFSYFTFLN. Over 402–404 the chain is Extracellular; the sequence is SMR.

This sequence belongs to the insect chemoreceptor superfamily. Heteromeric odorant receptor channel (TC 1.A.69) family. Or1a subfamily. As to quaternary structure, interacts with Orco. Complexes exist early in the endomembrane system in olfactory sensory neurons (OSNs), coupling these complexes to the conserved ciliary trafficking pathway.

It localises to the cell membrane. Its function is as follows. Odorant receptor which mediates acceptance or avoidance behavior, depending on its substrates. The odorant receptor repertoire encodes a large collection of odor stimuli that vary widely in identity, intensity, and duration. May form a complex with Orco to form odorant-sensing units, providing sensitive and prolonged odorant signaling and calcium permeability. Involved in the behavioral responses to octanol, anisole, and 2-heptanone. In Drosophila melanogaster (Fruit fly), this protein is Odorant receptor 74a (Or74a).